We begin with the raw amino-acid sequence, 139 residues long: MALKTLQALIFLGLFAASCLAQAPAPAPITFLPPVESPSPVVTPTAEPPAPVASPPIPANEPTPVPTTPPTVSPPTTSPTTSPVASPPKPYALAPGPSGPTPAPAPAPRADGPVADSALTNKAFLVSTVIAGALYAVLA.

The signal sequence occupies residues 1–21; it reads MALKTLQALIFLGLFAASCLA. Gln22 carries the pyrrolidone carboxylic acid modification. The interval 30–115 is disordered; it reads TFLPPVESPS…PAPRADGPVA (86 aa). Composition is skewed to pro residues over residues 46–77 and 97–107; these read AEPPAPVASPPIPANEPTPVPTTPPTVSPPTT and PSGPTPAPAPA. The GPI-anchor amidated aspartate moiety is linked to residue Asp116. Positions 117-139 are cleaved as a propeptide — removed in mature form; it reads SALTNKAFLVSTVIAGALYAVLA.

Belongs to the classical AGP family. Post-translationally, O-glycosylated on the hydroxyproline residues. Expressed at a low level in roots.

Its subcellular location is the cell membrane. Functionally, proteoglycan that seems to be implicated in diverse developmental roles such as differentiation, cell-cell recognition, embryogenesis and programmed cell death. The polypeptide is Classical arabinogalactan protein 3 (AGP3) (Arabidopsis thaliana (Mouse-ear cress)).